We begin with the raw amino-acid sequence, 404 residues long: Tryptophan synthase beta chain (404 aa).

An N6-(pyridoxal phosphate)lysine modification is found at K94.

It belongs to the TrpB family. In terms of assembly, tetramer of two alpha and two beta chains. Pyridoxal 5'-phosphate serves as cofactor.

The catalysed reaction is (1S,2R)-1-C-(indol-3-yl)glycerol 3-phosphate + L-serine = D-glyceraldehyde 3-phosphate + L-tryptophan + H2O. The protein operates within amino-acid biosynthesis; L-tryptophan biosynthesis; L-tryptophan from chorismate: step 5/5. The beta subunit is responsible for the synthesis of L-tryptophan from indole and L-serine. This Staphylococcus aureus (strain JH1) protein is Tryptophan synthase beta chain.